Consider the following 173-residue polypeptide: Flagellar assembly factor FliW (173 aa).

The interval 152–173 (STTVRRKASPPAAGEDKGDVQE) is disordered.

Belongs to the FliW family. Interacts with translational regulator CsrA and flagellin(s).

It is found in the cytoplasm. Functionally, acts as an anti-CsrA protein, binds CsrA and prevents it from repressing translation of its target genes, one of which is flagellin. Binds to flagellin and participates in the assembly of the flagellum. This Nitratidesulfovibrio vulgaris (strain ATCC 29579 / DSM 644 / CCUG 34227 / NCIMB 8303 / VKM B-1760 / Hildenborough) (Desulfovibrio vulgaris) protein is Flagellar assembly factor FliW.